Consider the following 1282-residue polypeptide: Trafficking protein particle complex subunit 8 (1282 aa).

Positions 245–287 are disordered; the sequence is TDAIAPGPNGASNQQSPSSPTSSVATISSTMPAVGSVSPNSHP. A compositionally biased stretch (low complexity) spans 255–273; sequence ASNQQSPSSPTSSVATISS.

Its function is as follows. Plays a role in endoplasmic reticulum to Golgi apparatus trafficking at a very early stage. Involved in collagen secretion. The polypeptide is Trafficking protein particle complex subunit 8 (Caenorhabditis elegans).